The following is a 663-amino-acid chain: Rho GTPase-activating protein 18 (663 aa).

The segment at 15–37 (YHPSGKDQTVGNSHAKAGEEATS) is disordered. 2 positions are modified to phosphoserine: Ser66 and Ser69. At Thr158 the chain carries Phosphothreonine. Disordered regions lie at residues 179–227 (RESK…PAPE) and 243–277 (QKES…TRIG). Basic and acidic residues-rich tracts occupy residues 197 to 219 (NENK…KLIP) and 245 to 258 (ESSK…KGDD). Ser263 bears the Phosphoserine mark. One can recognise a Rho-GAP domain in the interval 324–523 (VPLTALLEQD…LLIKYQKLLW (200 aa)). Ser610 bears the Phosphoserine mark.

Interacts with MPHOSPH6.

Its subcellular location is the cytoplasm. Rho GTPase activating protein that suppresses F-actin polymerization by inhibiting Rho. Rho GTPase activating proteins act by converting Rho-type GTPases to an inactive GDP-bound state. Plays a key role in tissue tension and 3D tissue shape by regulating cortical actomyosin network formation. Acts downstream of YAP1 and inhibits actin polymerization, which in turn reduces nuclear localization of YAP1. Regulates cell shape, spreading, and migration. The protein is Rho GTPase-activating protein 18 of Homo sapiens (Human).